The following is a 680-amino-acid chain: DNA-directed RNA polymerase subunit beta' (680 aa).

Positions 69, 71, 87, and 90 each coordinate Zn(2+). Residues D489, D491, and D493 each contribute to the Mg(2+) site.

The protein belongs to the RNA polymerase beta' chain family. RpoC1 subfamily. In plastids the minimal PEP RNA polymerase catalytic core is composed of four subunits: alpha, beta, beta', and beta''. When a (nuclear-encoded) sigma factor is associated with the core the holoenzyme is formed, which can initiate transcription. Mg(2+) serves as cofactor. Zn(2+) is required as a cofactor.

It localises to the plastid. The protein localises to the chloroplast. The catalysed reaction is RNA(n) + a ribonucleoside 5'-triphosphate = RNA(n+1) + diphosphate. Its function is as follows. DNA-dependent RNA polymerase catalyzes the transcription of DNA into RNA using the four ribonucleoside triphosphates as substrates. This chain is DNA-directed RNA polymerase subunit beta', found in Lepidium virginicum (Virginia pepperweed).